A 485-amino-acid polypeptide reads, in one-letter code: Membrane-bound lytic murein transglycosylase F (485 aa).

Positions 1-29 (MFAHTALRQRCAKWLLATGLFLLLGACVE) are cleaved as a signal peptide. The interval 30–267 (KPSTLERVKE…RLKDRYYGHV (238 aa)) is non-LT domain. Residues 268-485 (DVLGYVGAYT…DKPADKSSPM (218 aa)) are LT domain. The active site involves Glu-314. A disordered region spans residues 465–485 (EGNLHVPGVNKDKPADKSSPM). Positions 474 to 485 (NKDKPADKSSPM) are enriched in basic and acidic residues.

In the N-terminal section; belongs to the bacterial solute-binding protein 3 family. This sequence in the C-terminal section; belongs to the transglycosylase Slt family.

The protein localises to the cell outer membrane. It carries out the reaction Exolytic cleavage of the (1-&gt;4)-beta-glycosidic linkage between N-acetylmuramic acid (MurNAc) and N-acetylglucosamine (GlcNAc) residues in peptidoglycan, from either the reducing or the non-reducing ends of the peptidoglycan chains, with concomitant formation of a 1,6-anhydrobond in the MurNAc residue.. Functionally, murein-degrading enzyme that degrades murein glycan strands and insoluble, high-molecular weight murein sacculi, with the concomitant formation of a 1,6-anhydromuramoyl product. Lytic transglycosylases (LTs) play an integral role in the metabolism of the peptidoglycan (PG) sacculus. Their lytic action creates space within the PG sacculus to allow for its expansion as well as for the insertion of various structures such as secretion systems and flagella. This Pseudomonas putida (strain ATCC 47054 / DSM 6125 / CFBP 8728 / NCIMB 11950 / KT2440) protein is Membrane-bound lytic murein transglycosylase F.